Consider the following 142-residue polypeptide: Large ribosomal subunit protein uL16 (142 aa).

Belongs to the universal ribosomal protein uL16 family. In terms of assembly, part of the 50S ribosomal subunit.

Functionally, binds 23S rRNA and is also seen to make contacts with the A and possibly P site tRNAs. The chain is Large ribosomal subunit protein uL16 from Phenylobacterium zucineum (strain HLK1).